Here is a 752-residue protein sequence, read N- to C-terminus: Probable beta-glucosidase D (752 aa).

An N-terminal signal peptide occupies residues 1–18; sequence MRFVSLAVGAALLGAAGA. Asn-187 and Asn-237 each carry an N-linked (GlcNAc...) asparagine glycan. Asp-265 is an active-site residue. Asn-299, Asn-343, Asn-441, Asn-510, Asn-532, Asn-571, Asn-586, Asn-638, Asn-661, and Asn-743 each carry an N-linked (GlcNAc...) asparagine glycan.

The protein belongs to the glycosyl hydrolase 3 family.

The protein localises to the secreted. It catalyses the reaction Hydrolysis of terminal, non-reducing beta-D-glucosyl residues with release of beta-D-glucose.. It participates in glycan metabolism; cellulose degradation. Beta-glucosidases are one of a number of cellulolytic enzymes involved in the degradation of cellulosic biomass. Catalyzes the last step releasing glucose from the inhibitory cellobiose. This is Probable beta-glucosidase D (bglD) from Aspergillus oryzae (strain ATCC 42149 / RIB 40) (Yellow koji mold).